We begin with the raw amino-acid sequence, 365 residues long: DNA replication and repair protein RecF (365 aa).

30 to 37 (GDNAQGKT) contacts ATP.

The protein belongs to the RecF family.

The protein resides in the cytoplasm. The RecF protein is involved in DNA metabolism; it is required for DNA replication and normal SOS inducibility. RecF binds preferentially to single-stranded, linear DNA. It also seems to bind ATP. The chain is DNA replication and repair protein RecF from Alkaliphilus oremlandii (strain OhILAs) (Clostridium oremlandii (strain OhILAs)).